The chain runs to 286 residues: Pyridoxal kinase PdxY (286 aa).

Substrate contacts are provided by residues S9 and 44-45 (MQ). ATP contacts are provided by D111, E147, and K180. D221 provides a ligand contact to substrate.

The protein belongs to the pyridoxine kinase family. PdxY subfamily. Homodimer. Mg(2+) is required as a cofactor.

It catalyses the reaction pyridoxal + ATP = pyridoxal 5'-phosphate + ADP + H(+). Its pathway is cofactor metabolism; pyridoxal 5'-phosphate salvage; pyridoxal 5'-phosphate from pyridoxal: step 1/1. Functionally, pyridoxal kinase involved in the salvage pathway of pyridoxal 5'-phosphate (PLP). Catalyzes the phosphorylation of pyridoxal to PLP. The protein is Pyridoxal kinase PdxY of Burkholderia orbicola (strain AU 1054).